Consider the following 507-residue polypeptide: Glycerol kinase (507 aa).

Residue Thr-12 participates in ADP binding. Thr-12, Thr-13, and Ser-14 together coordinate ATP. A sn-glycerol 3-phosphate-binding site is contributed by Thr-12. An ADP-binding site is contributed by Arg-16. Arg-82, Glu-83, Tyr-134, and Asp-250 together coordinate sn-glycerol 3-phosphate. The glycerol site is built by Arg-82, Glu-83, Tyr-134, Asp-250, and Gln-251. Thr-272 and Gly-316 together coordinate ADP. Residues Thr-272, Gly-316, Gln-320, and Gly-417 each coordinate ATP. 2 residues coordinate ADP: Gly-417 and Asn-421.

It belongs to the FGGY kinase family.

It catalyses the reaction glycerol + ATP = sn-glycerol 3-phosphate + ADP + H(+). It functions in the pathway polyol metabolism; glycerol degradation via glycerol kinase pathway; sn-glycerol 3-phosphate from glycerol: step 1/1. Its activity is regulated as follows. Inhibited by fructose 1,6-bisphosphate (FBP). Key enzyme in the regulation of glycerol uptake and metabolism. Catalyzes the phosphorylation of glycerol to yield sn-glycerol 3-phosphate. This Beijerinckia indica subsp. indica (strain ATCC 9039 / DSM 1715 / NCIMB 8712) protein is Glycerol kinase.